Reading from the N-terminus, the 232-residue chain is Putative dimethylsulfoniopropionate lyase DddL (232 aa).

A divalent metal cation-binding residues include histidine 154, glutamate 159, tyrosine 161, and histidine 190.

This sequence belongs to the non-heme iron-dependent dioxygenase family. In terms of assembly, homodimer. A divalent metal cation serves as cofactor.

It carries out the reaction S,S-dimethyl-beta-propiothetin = acrylate + dimethyl sulfide + H(+). Functionally, may cleave dimethylsulfoniopropionate (DMSP), releasing dimethyl sulfide (DMS). DMS is the principal form by which sulfur is transported from oceans to the atmosphere. The real activity of the protein is however subject to debate and it is unclear whether it constitutes a real dimethylsulfoniopropionate lyase in vivo. The sequence is that of Putative dimethylsulfoniopropionate lyase DddL (dddL) from Cereibacter sphaeroides (strain ATCC 17023 / DSM 158 / JCM 6121 / CCUG 31486 / LMG 2827 / NBRC 12203 / NCIMB 8253 / ATH 2.4.1.) (Rhodobacter sphaeroides).